We begin with the raw amino-acid sequence, 291 residues long: MEMO1 family protein PH1626 (291 aa).

The protein belongs to the MEMO1 family.

The protein is MEMO1 family protein PH1626 of Pyrococcus horikoshii (strain ATCC 700860 / DSM 12428 / JCM 9974 / NBRC 100139 / OT-3).